A 161-amino-acid polypeptide reads, in one-letter code: uncharacterized protein (161 aa).

This is an uncharacterized protein from Encephalitozoon cuniculi (strain GB-M1) (Microsporidian parasite).